A 51-amino-acid chain; its full sequence is Ribosome biogenesis protein Nop10 (51 aa).

The protein belongs to the NOP10 family.

Functionally, involved in ribosome biogenesis; more specifically in 18S rRNA pseudouridylation and in cleavage of pre-rRNA. The chain is Ribosome biogenesis protein Nop10 from Methanococcus aeolicus (strain ATCC BAA-1280 / DSM 17508 / OCM 812 / Nankai-3).